A 207-amino-acid polypeptide reads, in one-letter code: Thymidine kinase (207 aa).

ATP contacts are provided by residues 15 to 22 (GCMFSGKS) and 88 to 91 (DEIQ). Glutamate 89 acts as the Proton acceptor in catalysis. Cysteine 145, cysteine 148, cysteine 183, and histidine 186 together coordinate Zn(2+). Basic residues predominate over residues 184–198 (RHHHEVPGKPKKRYN). Residues 184–207 (RHHHEVPGKPKKRYNHPLAGHTGE) form a disordered region.

Belongs to the thymidine kinase family. As to quaternary structure, homotetramer.

The protein localises to the cytoplasm. It carries out the reaction thymidine + ATP = dTMP + ADP + H(+). The protein is Thymidine kinase of Geobacillus kaustophilus (strain HTA426).